The chain runs to 258 residues: Putative L-lactate dehydrogenase operon regulatory protein (258 aa).

The region spanning 6 to 74 (RRLSDEVADR…RGGGTFIRWR (69 aa)) is the HTH gntR-type domain. A DNA-binding region (H-T-H motif) is located at residues 34–53 (ERQLAMQLGVSRNSLREALA).

Functionally, may be a regulatory protein for the LCT genes. This is Putative L-lactate dehydrogenase operon regulatory protein (lldR) from Escherichia coli (strain K12).